Here is a 297-residue protein sequence, read N- to C-terminus: uncharacterized protein (297 aa).

The first 24 residues, 1–24 (MRAINKFLITVCIALLASVAVALG), serve as a signal peptide directing secretion. 15 residues coordinate heme: Cys-58, Cys-61, His-62, Cys-141, Cys-144, His-145, Cys-167, Cys-170, His-171, Cys-223, Cys-226, His-227, Cys-264, Cys-267, and His-268. Positions 277–297 (TNSVDTWSREGEGAEVQQLPH) are disordered.

Post-translationally, binds 5 heme groups per subunit.

This is an uncharacterized protein from Archaeoglobus fulgidus (strain ATCC 49558 / DSM 4304 / JCM 9628 / NBRC 100126 / VC-16).